The following is a 169-amino-acid chain: ALK and LTK ligand 2a (169 aa).

Residues 1 to 25 (MRALRAPVLVMGLVLLICTAAQSDA) form the signal peptide. The segment at 45–68 (ENSADDESAQKTESAPEPKDTHHL) is disordered. Over residues 52–67 (SAQKTESAPEPKDTHH) the composition is skewed to basic and acidic residues. Cystine bridges form between Cys130-Cys166 and Cys144-Cys153.

The protein belongs to the ALKAL family. In terms of assembly, homodimer. As to expression, expressed at high level in the notochord and iridophore stripes of the trunk, as well as in the eye and swim bladder.

The protein localises to the secreted. The protein resides in the cell membrane. Cytokine that acts as a physiological ligand for receptor tyrosine kinases LTK and ALK. Required for neural crest cell differentiation and iridophore development during embryonic iridophore development and adult stripe development by acting as a receptor for LTK. This Danio rerio (Zebrafish) protein is ALK and LTK ligand 2a.